The following is a 207-amino-acid chain: uncharacterized protein (207 aa).

Residues 1-19 (MRFNVSFLLSLLLPTLAFA) form the signal peptide.

It to P.multocida PM1509.

This is an uncharacterized protein from Pasteurella multocida (strain Pm70).